The primary structure comprises 137 residues: Large ribosomal subunit protein uL16c (137 aa).

It belongs to the universal ribosomal protein uL16 family. As to quaternary structure, part of the 50S ribosomal subunit.

Its subcellular location is the plastid. The sequence is that of Large ribosomal subunit protein uL16c from Aneura mirabilis (Parasitic liverwort).